We begin with the raw amino-acid sequence, 438 residues long: Choline monooxygenase, chloroplastic (438 aa).

A chloroplast-targeting transit peptide spans 1 to 58 (MAASATTMLLKYPTTVCGIPNSSANNSTDPSNNIVQIPQTTTTNSPLLKFRTPNKPVN). Positions 121–228 (WQVAGYSDQV…VAVWGPFILI (108 aa)) constitute a Rieske domain. Residues Cys-163, His-165, Cys-182, and His-185 each contribute to the [2Fe-2S] cluster site. Positions 288 and 293 each coordinate Fe cation.

The protein belongs to the choline monooxygenase family. [2Fe-2S] cluster serves as cofactor. Requires Fe cation as cofactor. It depends on Mg(2+) as a cofactor. As to expression, expressed in roots and leaves.

The protein localises to the plastid. Its subcellular location is the chloroplast stroma. It carries out the reaction choline + 2 reduced [2Fe-2S]-[ferredoxin] + O2 + 2 H(+) = betaine aldehyde hydrate + 2 oxidized [2Fe-2S]-[ferredoxin] + H2O. Its pathway is amine and polyamine biosynthesis; betaine biosynthesis via choline pathway; betaine aldehyde from choline (monooxygenase route): step 1/1. Its function is as follows. Catalyzes the first step of the osmoprotectant glycine betaine synthesis. The protein is Choline monooxygenase, chloroplastic (CMO) of Atriplex hortensis (Mountain spinach).